We begin with the raw amino-acid sequence, 156 residues long: S-ribosylhomocysteine lyase (156 aa).

Fe cation contacts are provided by His53, His57, and Cys122.

Belongs to the LuxS family. In terms of assembly, homodimer. Requires Fe cation as cofactor.

It catalyses the reaction S-(5-deoxy-D-ribos-5-yl)-L-homocysteine = (S)-4,5-dihydroxypentane-2,3-dione + L-homocysteine. Involved in the synthesis of autoinducer 2 (AI-2) which is secreted by bacteria and is used to communicate both the cell density and the metabolic potential of the environment. The regulation of gene expression in response to changes in cell density is called quorum sensing. Catalyzes the transformation of S-ribosylhomocysteine (RHC) to homocysteine (HC) and 4,5-dihydroxy-2,3-pentadione (DPD). The polypeptide is S-ribosylhomocysteine lyase (Finegoldia magna (strain ATCC 29328 / DSM 20472 / WAL 2508) (Peptostreptococcus magnus)).